Consider the following 456-residue polypeptide: GTPase Der (456 aa).

EngA-type G domains are found at residues 4–169 and 177–352; these read PIVA…PAVE and IKVA…ESHK. GTP-binding positions include 10-17, 57-61, 120-123, 183-190, 230-234, and 295-298; these read GRPNVGKS, DTGGL, NKCE, DTAGI, and NKWD. Residues 353–438 form the KH-like domain; it reads RRVSTSVINE…PIILLWRSKK (86 aa).

This sequence belongs to the TRAFAC class TrmE-Era-EngA-EngB-Septin-like GTPase superfamily. EngA (Der) GTPase family. As to quaternary structure, associates with the 50S ribosomal subunit.

In terms of biological role, GTPase that plays an essential role in the late steps of ribosome biogenesis. This Nostoc punctiforme (strain ATCC 29133 / PCC 73102) protein is GTPase Der.